The chain runs to 561 residues: Lengsin (561 aa).

2 disordered regions span residues Met-1–Ala-78 and Ser-91–Asn-112. Basic residues predominate over residues Asn-26 to Lys-37. Residues Met-50–Asp-63 show a composition bias toward polar residues. In terms of domain architecture, GS beta-grasp spans Asn-135–Gly-229. The GS catalytic domain maps to Pro-236–Ile-561.

This sequence belongs to the glutamine synthetase family. In terms of assembly, dodecamer. Interacts with BFSP2 and VIM. As to expression, expressed in lens.

Functionally, may act as a component of the cytoskeleton or as a chaperone for the reorganization of intermediate filament proteins during terminal differentiation in the lens. Does not seem to have enzymatic activity. This chain is Lengsin (Lgsn), found in Rattus norvegicus (Rat).